We begin with the raw amino-acid sequence, 663 residues long: Glutamate-rich protein 6 (663 aa).

Disordered stretches follow at residues 1–74 (MAHL…ETFS) and 106–136 (LTST…HKSF). Residues 20-69 (ESEEELEEEEEEEEVEEEEEEVEEEEEEVEEEEEEVVEEELVGEEQELEA) are compositionally biased toward acidic residues. Low complexity predominate over residues 112-132 (PSQSATSTETPSASPPSSTSS).

It belongs to the ERICH6 family.

The protein resides in the nucleus. This is Glutamate-rich protein 6 (ERICH6) from Homo sapiens (Human).